The chain runs to 253 residues: tRNA1(Val) (adenine(37)-N6)-methyltransferase (253 aa).

It belongs to the methyltransferase superfamily. tRNA (adenine-N(6)-)-methyltransferase family.

It localises to the cytoplasm. It carries out the reaction adenosine(37) in tRNA1(Val) + S-adenosyl-L-methionine = N(6)-methyladenosine(37) in tRNA1(Val) + S-adenosyl-L-homocysteine + H(+). In terms of biological role, specifically methylates the adenine in position 37 of tRNA(1)(Val) (anticodon cmo5UAC). The polypeptide is tRNA1(Val) (adenine(37)-N6)-methyltransferase (Dickeya chrysanthemi (strain Ech1591) (Dickeya zeae (strain Ech1591))).